An 821-amino-acid chain; its full sequence is Phenylalanine--tRNA ligase beta subunit (821 aa).

In terms of domain architecture, tRNA-binding spans 39–149 (RTWAEGVVVG…DAVTVGEDVR (111 aa)). A B5 domain is found at 409–503 (PLERTLTLRL…RLYGYDRFEE (95 aa)). Mg(2+)-binding residues include aspartate 481, aspartate 487, glutamate 490, and glutamate 491. Residues 724–820 (STYPASDRDL…LVEKYAVTLR (97 aa)) form the FDX-ACB domain.

Belongs to the phenylalanyl-tRNA synthetase beta subunit family. Type 1 subfamily. As to quaternary structure, tetramer of two alpha and two beta subunits. Requires Mg(2+) as cofactor.

It is found in the cytoplasm. The enzyme catalyses tRNA(Phe) + L-phenylalanine + ATP = L-phenylalanyl-tRNA(Phe) + AMP + diphosphate + H(+). This is Phenylalanine--tRNA ligase beta subunit from Thermosynechococcus vestitus (strain NIES-2133 / IAM M-273 / BP-1).